A 202-amino-acid chain; its full sequence is Kunitz trypsin inhibitor 7 (202 aa).

The first 25 residues, 1 to 25, serve as a signal peptide directing secretion; the sequence is MKTFRSMLISLLLVAITTTSGVVEG. A disulfide bridge connects residues Cys69 and Cys115. Asn93, Asn136, Asn144, and Asn198 each carry an N-linked (GlcNAc...) asparagine glycan.

The protein belongs to the protease inhibitor I3 (leguminous Kunitz-type inhibitor) family.

Functionally, exhibits Kunitz trypsin protease inhibitor activity. This chain is Kunitz trypsin inhibitor 7, found in Arabidopsis thaliana (Mouse-ear cress).